The sequence spans 215 residues: MTLKVDVKTPAGKTDGSVELPAELFDVEPNIALMHQVVTAQLAAKRQGTHSTKTRGEVSGGGKKPYRQKGSGRARQGSTRAPQFTGGGTVHGPKPRDYSQRTPKKMIAAALRGALSDRARNDRIHAVTELVEGQTPSTKSAKTFLGTLTENKKVLVVIGRTDEVGAKSVRNLPGVHVISPDQLNTYDVLNADDVVFSVEALNAYISANSKEGASV.

A disordered region spans residues 43–100; it reads AAKRQGTHSTKTRGEVSGGGKKPYRQKGSGRARQGSTRAPQFTGGGTVHGPKPRDYSQ.

Belongs to the universal ribosomal protein uL4 family. Part of the 50S ribosomal subunit.

Functionally, one of the primary rRNA binding proteins, this protein initially binds near the 5'-end of the 23S rRNA. It is important during the early stages of 50S assembly. It makes multiple contacts with different domains of the 23S rRNA in the assembled 50S subunit and ribosome. In terms of biological role, forms part of the polypeptide exit tunnel. This is Large ribosomal subunit protein uL4 from Mycolicibacterium smegmatis (Mycobacterium smegmatis).